We begin with the raw amino-acid sequence, 129 residues long: Small ribosomal subunit protein uS11 (129 aa).

Belongs to the universal ribosomal protein uS11 family. As to quaternary structure, part of the 30S ribosomal subunit. Interacts with proteins S7 and S18. Binds to IF-3.

Its function is as follows. Located on the platform of the 30S subunit, it bridges several disparate RNA helices of the 16S rRNA. Forms part of the Shine-Dalgarno cleft in the 70S ribosome. The polypeptide is Small ribosomal subunit protein uS11 (Carboxydothermus hydrogenoformans (strain ATCC BAA-161 / DSM 6008 / Z-2901)).